The chain runs to 501 residues: Histidine--tRNA ligase (501 aa).

This sequence belongs to the class-II aminoacyl-tRNA synthetase family. As to quaternary structure, homodimer.

It is found in the cytoplasm. The enzyme catalyses tRNA(His) + L-histidine + ATP = L-histidyl-tRNA(His) + AMP + diphosphate + H(+). The polypeptide is Histidine--tRNA ligase (Methylocella silvestris (strain DSM 15510 / CIP 108128 / LMG 27833 / NCIMB 13906 / BL2)).